We begin with the raw amino-acid sequence, 961 residues long: RNA polymerase II subunit A C-terminal domain phosphatase (961 aa).

Met1 carries the post-translational modification N-acetylmethionine. Positions 178-344 (HRNRKLVLMV…SRESQTRKKV (167 aa)) constitute an FCP1 homology domain. The disordered stretch occupies residues 328–589 (DMNAPPGSRE…EEEDTDEDDH (262 aa)). Over residues 394 to 406 (DSPRPGKPDERDI) the composition is skewed to basic and acidic residues. At Ser395 the chain carries Phosphoserine. The span at 450–462 (LDFDLSSDSESSS) shows a compositional bias: acidic residues. Low complexity predominate over residues 463-475 (ESEGTKSSSSASD). Acidic residues predominate over residues 575 to 588 (SMEEEEEEDTDEDD). Residues 629 to 728 (LKSKVLADVA…DKVEEQLFPL (100 aa)) enclose the BRCT domain. 2 positions are modified to phosphoserine: Ser674 and Ser740. Disordered stretches follow at residues 730-752 (DDHT…GVPP) and 780-949 (KLIR…ADEM). Lys780 bears the N6-acetyllysine mark. Residues 793–803 (SSSLPIRQEPS) show a composition bias toward polar residues. At Ser839 the chain carries Phosphoserine. Basic and acidic residues predominate over residues 850–859 (CKEDLESMDK). 2 stretches are compositionally biased toward acidic residues: residues 860 to 873 (EVDD…DDSD) and 937 to 947 (NEDEGSSSEAD). A phosphoserine mark is found at Ser869 and Ser872.

As to quaternary structure, homodimer. Interacts with GTF2F1. Interacts with WDR77, SNRPB and SNRNP70. Phosphorylated. In the presence of TFIIF, the phosphorylated form has an increased CTD phosphatase activity. The phosphorylation is required for the physical interaction with GTF2F1. In terms of tissue distribution, ubiquitously expressed.

It localises to the nucleus. Its subcellular location is the cytoplasm. The protein resides in the cytoskeleton. The protein localises to the microtubule organizing center. It is found in the centrosome. It localises to the spindle pole. Its subcellular location is the midbody. The catalysed reaction is O-phospho-L-seryl-[protein] + H2O = L-seryl-[protein] + phosphate. It carries out the reaction O-phospho-L-threonyl-[protein] + H2O = L-threonyl-[protein] + phosphate. Functionally, processively dephosphorylates 'Ser-2' and 'Ser-5' of the heptad repeats YSPTSPS in the C-terminal domain of the largest RNA polymerase II subunit. This promotes the activity of RNA polymerase II. Plays a role in the exit from mitosis by dephosphorylating crucial mitotic substrates (USP44, CDC20 and WEE1) that are required for M-phase-promoting factor (MPF)/CDK1 inactivation. This is RNA polymerase II subunit A C-terminal domain phosphatase (CTDP1) from Homo sapiens (Human).